A 590-amino-acid polypeptide reads, in one-letter code: Synaptotagmin-3 (590 aa).

The Vesicular portion of the chain corresponds to 1-54; sequence MSGDYEDDLCRRALILVSDLCARVRDADTNDRCQEFNDRIRGYPRGPDADISVS. The cysteine motif stretch occupies residues 10 to 34; the sequence is CRRALILVSDLCARVRDADTNDRCQ. The chain crosses the membrane as a helical span at residues 55–75; that stretch reads LLSVIVTFCGIVLLGVSLFVS. At 76–590 the chain is on the cytoplasmic side; sequence WKLCWVPWRD…KGLSEKENSE (515 aa). Disordered regions lie at residues 143 to 220, 234 to 260, and 273 to 295; these read AELL…VTSL, TQQTLTSQPDPSSEERPPALPLPLPGG, and ELYQGTGPGGRRSGGGPGSGEAG. Over residues 185 to 203 the composition is skewed to low complexity; the sequence is SPELPSEGGAGSGLLLLPP. Residues 234–243 are compositionally biased toward polar residues; the sequence is TQQTLTSQPD. The segment covering 278–295 has biased composition (gly residues); it reads TGPGGRRSGGGPGSGEAG. An Omega-N-methylarginine modification is found at arginine 284. C2 domains lie at 299–420 and 431–565; these read PCGR…PLWR and DLGE…EHWH. Residues aspartate 330, aspartate 336, aspartate 388, phenylalanine 389, aspartate 390, serine 393, aspartate 396, aspartate 462, aspartate 468, aspartate 522, and aspartate 524 each contribute to the Ca(2+) site.

It belongs to the synaptotagmin family. As to quaternary structure, homodimer; disulfide-linked via the cysteine motif. Can also form heterodimers with SYT6, SYT9 and SYT10. The cofactor is Ca(2+). Expressed in melanocytes.

Its subcellular location is the cell membrane. It is found in the cytoplasmic vesicle. The protein resides in the secretory vesicle membrane. Its function is as follows. Ca(2+) sensor involved in Ca(2+)-dependent exocytosis of secretory vesicles through Ca(2+) and phospholipid binding to the C2 domain. Ca(2+) induces binding of the C2-domains to phospholipid membranes and to assembled SNARE-complexes; both actions contribute to triggering exocytosis. Plays a role in dendrite formation by melanocytes. This is Synaptotagmin-3 (SYT3) from Homo sapiens (Human).